A 75-amino-acid polypeptide reads, in one-letter code: MIGDILLFGTLLMNAGAVLNFKLKKKDTQGFGEESREPSTGDNIREFLLSLRYFRIFIALWNIFMMFCMIVLFGS.

The signal sequence occupies residues 1–17 (MIGDILLFGTLLMNAGA). Over 18–53 (VLNFKLKKKDTQGFGEESREPSTGDNIREFLLSLRY) the chain is Extracellular. A helical transmembrane segment spans residues 54-74 (FRIFIALWNIFMMFCMIVLFG). Position 75 (serine 75) is a topological domain, cytoplasmic.

This sequence belongs to the SMIM7 family.

It is found in the membrane. In Homo sapiens (Human), this protein is Small integral membrane protein 7 (SMIM7).